Here is a 433-residue protein sequence, read N- to C-terminus: Putative purine permease YbbY (433 aa).

Residues 1–17 (MFNFAVSRESLLSGFQW) lie on the Periplasmic side of the membrane. A helical membrane pass occupies residues 18 to 38 (FFFIFCNTVVVPPTLLSAFQL). The Cytoplasmic segment spans residues 39-42 (PQSS). A helical transmembrane segment spans residues 43-63 (LLTLTQYAFLATALACFAQAF). Residues 64–68 (CGHRR) are Periplasmic-facing. The helical transmembrane segment at 69 to 89 (AIMEGPGGLWWGTILTITLGE) threads the bilayer. The Cytoplasmic segment spans residues 90–102 (ASRGTPINDIATS). The helical transmembrane segment at 103–123 (LAVGIALSGVLTMLIGFSGLG) threads the bilayer. At 124 to 130 (HRLARLF) the chain is on the periplasmic side. The chain crosses the membrane as a helical span at residues 131–151 (TPSVMVLFMLMLGAQLTTIFF). Residues 152-169 (KGMLGLPFGIADPNFKIQ) lie on the Cytoplasmic side of the membrane. Residues 170–190 (LPPFALSVAVMCLVLAMIIFL) form a helical membrane-spanning segment. The Periplasmic portion of the chain corresponds to 191-196 (PQRFAR). The helical transmembrane segment at 197 to 217 (YGLLVGTITGWLLWYFCFPSS) threads the bilayer. At 218-230 (HSLSGELHWQWFP) the chain is on the cytoplasmic side. Residues 231–251 (LGSGGALSPGIILTAVITGLV) traverse the membrane as a helical segment. The Periplasmic portion of the chain corresponds to 252–288 (NISNTYGAIRGTDVFYPQQGAGNTRYRRSFVATGFMT). The chain crosses the membrane as a helical span at residues 289–309 (LITVPLAVIPFSPFVSSIGLL). Topologically, residues 310–319 (TQTGDYTRRS) are cytoplasmic. A helical membrane pass occupies residues 320–340 (FIYGSVICLLVALVPALTRLF). Over 341-345 (CSIPL) the chain is Periplasmic. A helical membrane pass occupies residues 346 to 366 (PVSSAVMLVSYLPLLFSALVF). Residues 367–379 (SQQITFTARNIYR) are Cytoplasmic-facing. Residues 380–400 (LALPLFVGIFLMALPPVYLQD) traverse the membrane as a helical segment. The Periplasmic segment spans residues 401–407 (LPLTLRP). The helical transmembrane segment at 408-428 (LLSNGLLVGILLAVLMDNLIP) threads the bilayer. The Cytoplasmic segment spans residues 429 to 433 (WERIE).

Belongs to the nucleobase:cation symporter-2 (NCS2) (TC 2.A.40) family.

It localises to the cell inner membrane. The sequence is that of Putative purine permease YbbY (ybbY) from Escherichia coli (strain K12).